The following is a 632-amino-acid chain: Threonine--tRNA ligase (632 aa).

One can recognise a TGS domain in the interval 1–61 (MPIITLPDGT…KTDANLAIIT (61 aa)). Residues 242-533 (DHRKIGKIQD…LIEHYEGAYP (292 aa)) form a catalytic region. Zn(2+) contacts are provided by Cys-333, His-384, and His-510.

This sequence belongs to the class-II aminoacyl-tRNA synthetase family. In terms of assembly, homodimer. The cofactor is Zn(2+).

The protein localises to the cytoplasm. The catalysed reaction is tRNA(Thr) + L-threonine + ATP = L-threonyl-tRNA(Thr) + AMP + diphosphate + H(+). Functionally, catalyzes the attachment of threonine to tRNA(Thr) in a two-step reaction: L-threonine is first activated by ATP to form Thr-AMP and then transferred to the acceptor end of tRNA(Thr). Also edits incorrectly charged L-seryl-tRNA(Thr). This chain is Threonine--tRNA ligase, found in Ruthia magnifica subsp. Calyptogena magnifica.